The following is a 479-amino-acid chain: Glycogen synthase (479 aa).

Position 15 (lysine 15) interacts with ADP-alpha-D-glucose.

It belongs to the glycosyltransferase 1 family. Bacterial/plant glycogen synthase subfamily.

It catalyses the reaction [(1-&gt;4)-alpha-D-glucosyl](n) + ADP-alpha-D-glucose = [(1-&gt;4)-alpha-D-glucosyl](n+1) + ADP + H(+). It participates in glycan biosynthesis; glycogen biosynthesis. Synthesizes alpha-1,4-glucan chains using ADP-glucose. The protein is Glycogen synthase of Clostridium novyi (strain NT).